We begin with the raw amino-acid sequence, 79 residues long: Ketoisovalerate oxidoreductase subunit VorC (79 aa).

4Fe-4S ferredoxin-type domains lie at 4–33 (AYPV…MSNK) and 40–70 (HYVE…VHIE). Cysteine 13, cysteine 16, cysteine 19, cysteine 23, cysteine 49, cysteine 52, cysteine 55, and cysteine 59 together coordinate [4Fe-4S] cluster.

As to quaternary structure, heterotrimer of the VorA, VorB and VorC subunits. [4Fe-4S] cluster is required as a cofactor.

It carries out the reaction 3-methyl-2-oxobutanoate + 2 oxidized [2Fe-2S]-[ferredoxin] + CoA = 2-methylpropanoyl-CoA + 2 reduced [2Fe-2S]-[ferredoxin] + CO2 + H(+). The chain is Ketoisovalerate oxidoreductase subunit VorC (vorC) from Methanothermobacter marburgensis (strain ATCC BAA-927 / DSM 2133 / JCM 14651 / NBRC 100331 / OCM 82 / Marburg) (Methanobacterium thermoautotrophicum).